The chain runs to 65 residues: Large ribosomal subunit protein bL35 (65 aa).

The protein belongs to the bacterial ribosomal protein bL35 family.

In Wolbachia sp. subsp. Brugia malayi (strain TRS), this protein is Large ribosomal subunit protein bL35.